The sequence spans 427 residues: Stemphyloxin II biosynthesis cluster transcription factor sthR (427 aa).

The zn(2)-C6 fungal-type DNA-binding region spans 15-45 (CDRCRKQKLRCPPDKDDMGTCGRCLRAGVAC). The disordered stretch occupies residues 51-70 (KPRGRSQKHGISTDGTSHVS). Residues 59-69 (HGISTDGTSHV) are compositionally biased toward polar residues.

It is found in the nucleus. In terms of biological role, transcription factor that regulates the expression of the gene cluster that mediates the biosynthesis of the phytotoxin stemphyloxin II. The polypeptide is Stemphyloxin II biosynthesis cluster transcription factor sthR (Phaeosphaeria nodorum (strain SN15 / ATCC MYA-4574 / FGSC 10173) (Glume blotch fungus)).